The chain runs to 221 residues: MSDGDYDYLIKFLALGDSGVGKTSVLYQYTDGKFNSKFITTVGIDFREKRVVYRANGPDGTVGRGQRIHLQLWDTAGQERFRSLTTAFFRDAMGFLLLFDLTNEQSFLNVRNWISQLQMHAYCENPDIVLCGNKSDLEDQRAVKEEEARELAEKYGIPYFETSAANGTNISQAIEMLLDLIMKRMERCVDKSWIPEGVVRSNGHTSTDQLSEEKEKGLCGC.

Ser-2 carries the N-acetylserine modification. Ser-2 carries the post-translational modification Phosphoserine. 16–24 (GDSGVGKTS) lines the GTP pocket. Residues 38 to 46 (FITTVGIDF) carry the Effector region motif. GTP is bound by residues 74-78 (DTAGQ), 133-136 (NKSD), and 163-165 (SAA). Cysteines 123 and 188 form a disulfide. 2 S-geranylgeranyl cysteine lipidation sites follow: Cys-219 and Cys-221. Cysteine methyl ester is present on Cys-221.

It belongs to the small GTPase superfamily. Rab family. Binds SYTL1, SLAC2B, MYRIP, SYTL3, SYTL4 and SYTL5. Interacts with RPH3A and RPH3A. Binds MLPH and SYTL2. Interacts with UNC13D. Does not interact with the BLOC-3 complex (heterodimer of HPS1 and HPS4). Interacts (GDP-bound form preferentially) with DENND10. In terms of tissue distribution, high levels in eye, intestine, lung, pancreas and spleen, and low or absent in brain, liver, heart, kidney, and skeletal muscle.

Its subcellular location is the membrane. It localises to the melanosome. It is found in the late endosome. The protein resides in the lysosome. The catalysed reaction is GTP + H2O = GDP + phosphate + H(+). Its activity is regulated as follows. Regulated by guanine nucleotide exchange factors (GEFs) which promote the exchange of bound GDP for free GTP, GTPase activating proteins (GAPs) which increase the GTP hydrolysis activity, and GDP dissociation inhibitors which inhibit the dissociation of the nucleotide from the GTPase. Activated by GEFs such as DENND10. Functionally, small GTPase which cycles between active GTP-bound and inactive GDP-bound states. In its active state, binds to a variety of effector proteins to regulate homeostasis of late endocytic pathway, including endosomal positioning, maturation and secretion. Plays a role in cytotoxic granule exocytosis in lymphocytes. Required for both granule maturation and granule docking and priming at the immunologic synapse. The chain is Ras-related protein Rab-27A (Rab27a) from Rattus norvegicus (Rat).